A 261-amino-acid polypeptide reads, in one-letter code: 4-hydroxy-tetrahydrodipicolinate reductase (261 aa).

9-14 (GCLGRM) is a binding site for NAD(+). NADP(+) is bound at residue Arg-36. NAD(+) contacts are provided by residues 97-99 (GTT) and 118-121 (SANM). Catalysis depends on His-151, which acts as the Proton donor/acceptor. His-152 is a (S)-2,3,4,5-tetrahydrodipicolinate binding site. Lys-155 acts as the Proton donor in catalysis. 161-162 (GT) provides a ligand contact to (S)-2,3,4,5-tetrahydrodipicolinate.

Belongs to the DapB family.

It is found in the cytoplasm. It catalyses the reaction (S)-2,3,4,5-tetrahydrodipicolinate + NAD(+) + H2O = (2S,4S)-4-hydroxy-2,3,4,5-tetrahydrodipicolinate + NADH + H(+). It carries out the reaction (S)-2,3,4,5-tetrahydrodipicolinate + NADP(+) + H2O = (2S,4S)-4-hydroxy-2,3,4,5-tetrahydrodipicolinate + NADPH + H(+). Its pathway is amino-acid biosynthesis; L-lysine biosynthesis via DAP pathway; (S)-tetrahydrodipicolinate from L-aspartate: step 4/4. Catalyzes the conversion of 4-hydroxy-tetrahydrodipicolinate (HTPA) to tetrahydrodipicolinate. The sequence is that of 4-hydroxy-tetrahydrodipicolinate reductase from Wolbachia sp. subsp. Drosophila simulans (strain wRi).